The chain runs to 438 residues: Serine hydroxymethyltransferase (438 aa).

Residues L133 and 137–139 (GHL) contribute to the (6S)-5,6,7,8-tetrahydrofolate site. Position 242 is an N6-(pyridoxal phosphate)lysine (K242).

Belongs to the SHMT family. As to quaternary structure, homodimer. Requires pyridoxal 5'-phosphate as cofactor.

Its subcellular location is the cytoplasm. The enzyme catalyses (6R)-5,10-methylene-5,6,7,8-tetrahydrofolate + glycine + H2O = (6S)-5,6,7,8-tetrahydrofolate + L-serine. Its pathway is one-carbon metabolism; tetrahydrofolate interconversion. It functions in the pathway amino-acid biosynthesis; glycine biosynthesis; glycine from L-serine: step 1/1. In terms of biological role, catalyzes the reversible interconversion of serine and glycine with tetrahydrofolate (THF) serving as the one-carbon carrier. This reaction serves as the major source of one-carbon groups required for the biosynthesis of purines, thymidylate, methionine, and other important biomolecules. Also exhibits THF-independent aldolase activity toward beta-hydroxyamino acids, producing glycine and aldehydes, via a retro-aldol mechanism. The protein is Serine hydroxymethyltransferase of Brucella ovis (strain ATCC 25840 / 63/290 / NCTC 10512).